A 343-amino-acid chain; its full sequence is Phenylalanine--tRNA ligase alpha subunit (343 aa).

Glu258 provides a ligand contact to Mg(2+).

Belongs to the class-II aminoacyl-tRNA synthetase family. Phe-tRNA synthetase alpha subunit type 1 subfamily. As to quaternary structure, tetramer of two alpha and two beta subunits. Mg(2+) serves as cofactor.

It localises to the cytoplasm. The enzyme catalyses tRNA(Phe) + L-phenylalanine + ATP = L-phenylalanyl-tRNA(Phe) + AMP + diphosphate + H(+). The sequence is that of Phenylalanine--tRNA ligase alpha subunit from Symbiobacterium thermophilum (strain DSM 24528 / JCM 14929 / IAM 14863 / T).